A 287-amino-acid chain; its full sequence is tRNA uridine(34) hydroxylase (287 aa).

Residues 132 to 226 (QGRPVVMLDT…YFEEVGGAHY (95 aa)) form the Rhodanese domain. C186 functions as the Cysteine persulfide intermediate in the catalytic mechanism.

This sequence belongs to the TrhO family.

It catalyses the reaction uridine(34) in tRNA + AH2 + O2 = 5-hydroxyuridine(34) in tRNA + A + H2O. In terms of biological role, catalyzes oxygen-dependent 5-hydroxyuridine (ho5U) modification at position 34 in tRNAs. In Paraburkholderia phytofirmans (strain DSM 17436 / LMG 22146 / PsJN) (Burkholderia phytofirmans), this protein is tRNA uridine(34) hydroxylase.